We begin with the raw amino-acid sequence, 952 residues long: Protocadherin-20 (952 aa).

The N-terminal stretch at 1 to 60 (MRGRGNARSLLVQAVSLRPATWHPCLDMGHLHRPSSRTSHRNLPHVFLLFLFVGPFNCLA) is a signal peptide. Topologically, residues 61–891 (SYSRATELLY…VESMSCMPTL (831 aa)) are extracellular. Cadherin domains lie at 64–210 (RATE…APQF), 211–321 (PISE…CPLF), 322–536 (IDSQ…APVF), 537–640 (LQPL…SPRF), 641–743 (INKD…PPLV), and 747–864 (QSNM…EPEI). The N-linked (GlcNAc...) asparagine glycan is linked to N135. N-linked (GlcNAc...) asparagine glycans are attached at residues N327 and N333. Residues N681, N749, N804, N845, and N850 are each glycosylated (N-linked (GlcNAc...) asparagine). The chain crosses the membrane as a helical span at residues 892–912 (VALSVISLGSITLVTGMGIYI). Topologically, residues 913-952 (CLRKGKKHHREDDNLEVQIPLKGKIDLCMRERKPVDISNI) are cytoplasmic.

It is found in the cell membrane. Functionally, potential calcium-dependent cell-adhesion protein. The protein is Protocadherin-20 (Pcdh20) of Mus musculus (Mouse).